The primary structure comprises 326 residues: Adenine deaminase (326 aa).

Zn(2+) is bound by residues His14, His16, and His194. The active-site Proton donor is Glu197. Asp275 lines the Zn(2+) pocket. A substrate-binding site is contributed by Asp276.

This sequence belongs to the metallo-dependent hydrolases superfamily. Adenosine and AMP deaminases family. Adenine deaminase type 2 subfamily. Zn(2+) is required as a cofactor.

The enzyme catalyses adenine + H2O + H(+) = hypoxanthine + NH4(+). Functionally, catalyzes the hydrolytic deamination of adenine to hypoxanthine. Plays an important role in the purine salvage pathway and in nitrogen catabolism. In Crocosphaera subtropica (strain ATCC 51142 / BH68) (Cyanothece sp. (strain ATCC 51142)), this protein is Adenine deaminase.